A 210-amino-acid chain; its full sequence is Acetoin utilization protein AcuA (210 aa).

The region spanning 20–161 (LIEGPVSPED…YRKIMEKMMN (142 aa)) is the N-acetyltransferase domain.

The protein belongs to the acetyltransferase family. Monomer.

Its pathway is ketone degradation; acetoin degradation. Its activity is regulated as follows. Activity is sensitive to salt concentration, a high concentration of KCL (500 mM) is needed for complete inactivation. Part of the acuABC operon, which is possibly involved in the breakdown of acetoin and butanediol. Acts as an acetyltransferase inactivating acetyl-CoA synthetase AcsA via acetylation at a Lys residue. This is Acetoin utilization protein AcuA (acuA) from Bacillus subtilis (strain 168).